Consider the following 493-residue polypeptide: Farnesoate epoxidase (493 aa).

A signal peptide spans 1 to 24 (MLALIVLCFILFFYIISRRHRGLC). A heme-binding site is contributed by Cys-433.

The protein belongs to the cytochrome P450 family. Heme is required as a cofactor. Constitutively expressed in corpora allata from the first instar larval to adult stages.

The enzyme catalyses (2E,6E)-farnesoate + reduced [NADPH--hemoprotein reductase] + O2 = juvenile hormone III carboxylate + oxidized [NADPH--hemoprotein reductase] + H2O + H(+). Functionally, catalyzes the conversion of farnesoate to juvenile hormone III acid in juvenile hormone biosynthesis. The protein is Farnesoate epoxidase of Bombyx mori (Silk moth).